Consider the following 422-residue polypeptide: Glycine amidinotransferase, mitochondrial (422 aa).

A mitochondrion-targeting transit peptide spans 1–37 (MLRVRCVRGGSRGAEAVHYIGSMLRKGFVGWVQRSFQ). Residues aspartate 253 and histidine 302 contribute to the active site. Cysteine 406 (amidino-cysteine intermediate) is an active-site residue.

The protein belongs to the amidinotransferase family. In terms of assembly, homodimer.

Its subcellular location is the mitochondrion inner membrane. It catalyses the reaction L-arginine + glycine = guanidinoacetate + L-ornithine. Its pathway is amine and polyamine biosynthesis; creatine biosynthesis; creatine from L-arginine and glycine: step 1/2. In terms of biological role, catalyzes the biosynthesis of guanidinoacetate, the immediate precursor of creatine. Creatine plays a vital role in energy metabolism in muscle tissues. May play a role in embryonic and central nervous system development. The polypeptide is Glycine amidinotransferase, mitochondrial (Xenopus tropicalis (Western clawed frog)).